The chain runs to 271 residues: Pyrroline-5-carboxylate reductase (271 aa).

The protein belongs to the pyrroline-5-carboxylate reductase family.

It is found in the cytoplasm. It catalyses the reaction L-proline + NADP(+) = (S)-1-pyrroline-5-carboxylate + NADPH + 2 H(+). The catalysed reaction is L-proline + NAD(+) = (S)-1-pyrroline-5-carboxylate + NADH + 2 H(+). The protein operates within amino-acid biosynthesis; L-proline biosynthesis; L-proline from L-glutamate 5-semialdehyde: step 1/1. Functionally, catalyzes the reduction of 1-pyrroline-5-carboxylate (PCA) to L-proline. This is Pyrroline-5-carboxylate reductase from Staphylococcus aureus (strain COL).